A 598-amino-acid polypeptide reads, in one-letter code: Elongation factor 4 (598 aa).

Positions 5–187 (ANIRNFSIIA…ALVEFIPAPT (183 aa)) constitute a tr-type G domain. GTP-binding positions include 17–22 (DHGKST) and 134–137 (NKID).

The protein belongs to the TRAFAC class translation factor GTPase superfamily. Classic translation factor GTPase family. LepA subfamily.

It is found in the cell inner membrane. It catalyses the reaction GTP + H2O = GDP + phosphate + H(+). Required for accurate and efficient protein synthesis under certain stress conditions. May act as a fidelity factor of the translation reaction, by catalyzing a one-codon backward translocation of tRNAs on improperly translocated ribosomes. Back-translocation proceeds from a post-translocation (POST) complex to a pre-translocation (PRE) complex, thus giving elongation factor G a second chance to translocate the tRNAs correctly. Binds to ribosomes in a GTP-dependent manner. This Psychrobacter cryohalolentis (strain ATCC BAA-1226 / DSM 17306 / VKM B-2378 / K5) protein is Elongation factor 4.